The sequence spans 353 residues: Holliday junction branch migration complex subunit RuvB (353 aa).

Residues 4–185 (ADRLITAAGG…FGIVQRLEFY (182 aa)) are large ATPase domain (RuvB-L). Residues Ile24, Arg25, Gly66, Lys69, Thr70, Thr71, 132–134 (EDF), Arg175, Tyr185, and Arg222 each bind ATP. Thr70 contacts Mg(2+). Positions 186-256 (NIADLSTIVS…TADKALNLLD (71 aa)) are small ATPAse domain (RuvB-S). A head domain (RuvB-H) region spans residues 259 to 353 (EHGFDHQDRR…DDVVDDPADL (95 aa)). DNA is bound by residues Arg295, Arg314, and Arg319.

It belongs to the RuvB family. Homohexamer. Forms an RuvA(8)-RuvB(12)-Holliday junction (HJ) complex. HJ DNA is sandwiched between 2 RuvA tetramers; dsDNA enters through RuvA and exits via RuvB. An RuvB hexamer assembles on each DNA strand where it exits the tetramer. Each RuvB hexamer is contacted by two RuvA subunits (via domain III) on 2 adjacent RuvB subunits; this complex drives branch migration. In the full resolvosome a probable DNA-RuvA(4)-RuvB(12)-RuvC(2) complex forms which resolves the HJ.

The protein resides in the cytoplasm. The catalysed reaction is ATP + H2O = ADP + phosphate + H(+). The RuvA-RuvB-RuvC complex processes Holliday junction (HJ) DNA during genetic recombination and DNA repair, while the RuvA-RuvB complex plays an important role in the rescue of blocked DNA replication forks via replication fork reversal (RFR). RuvA specifically binds to HJ cruciform DNA, conferring on it an open structure. The RuvB hexamer acts as an ATP-dependent pump, pulling dsDNA into and through the RuvAB complex. RuvB forms 2 homohexamers on either side of HJ DNA bound by 1 or 2 RuvA tetramers; 4 subunits per hexamer contact DNA at a time. Coordinated motions by a converter formed by DNA-disengaged RuvB subunits stimulates ATP hydrolysis and nucleotide exchange. Immobilization of the converter enables RuvB to convert the ATP-contained energy into a lever motion, pulling 2 nucleotides of DNA out of the RuvA tetramer per ATP hydrolyzed, thus driving DNA branch migration. The RuvB motors rotate together with the DNA substrate, which together with the progressing nucleotide cycle form the mechanistic basis for DNA recombination by continuous HJ branch migration. Branch migration allows RuvC to scan DNA until it finds its consensus sequence, where it cleaves and resolves cruciform DNA. The chain is Holliday junction branch migration complex subunit RuvB from Pseudomonas savastanoi pv. phaseolicola (strain 1448A / Race 6) (Pseudomonas syringae pv. phaseolicola (strain 1448A / Race 6)).